We begin with the raw amino-acid sequence, 276 residues long: 2-dehydro-3-deoxyphosphooctonate aldolase (276 aa).

Belongs to the KdsA family.

The protein resides in the cytoplasm. The catalysed reaction is D-arabinose 5-phosphate + phosphoenolpyruvate + H2O = 3-deoxy-alpha-D-manno-2-octulosonate-8-phosphate + phosphate. It functions in the pathway carbohydrate biosynthesis; 3-deoxy-D-manno-octulosonate biosynthesis; 3-deoxy-D-manno-octulosonate from D-ribulose 5-phosphate: step 2/3. It participates in bacterial outer membrane biogenesis; lipopolysaccharide biosynthesis. The protein is 2-dehydro-3-deoxyphosphooctonate aldolase of Helicobacter pylori (strain Shi470).